The chain runs to 349 residues: Green-sensitive opsin-3 (349 aa).

Topologically, residues Met1 to Gln36 are extracellular. N-linked (GlcNAc...) asparagine glycosylation is found at Asn2 and Asn15. A helical transmembrane segment spans residues Phe37 to Val61. Topologically, residues Thr62–Asn73 are cytoplasmic. Residues Phe74 to Ile99 traverse the membrane as a helical segment. The Extracellular segment spans residues Asn100–Glu113. Residues Cys110 and Cys187 are joined by a disulfide bond. A helical membrane pass occupies residues Gly114–Ile133. Over Glu134 to His152 the chain is Cytoplasmic. A helical transmembrane segment spans residues Ala153–Ser176. The Extracellular portion of the chain corresponds to Arg177–Ser202. An N-linked (GlcNAc...) asparagine glycan is attached at Asn200. A helical transmembrane segment spans residues Tyr203–Val230. At Lys231 to Arg252 the chain is on the cytoplasmic side. Residues Met253–Phe276 form a helical membrane-spanning segment. The Extracellular segment spans residues Phe277–Ser284. Residues Ala285–Leu309 traverse the membrane as a helical segment. Lys296 is modified (N6-(retinylidene)lysine). The Cytoplasmic portion of the chain corresponds to Asn310–Ala349. A disordered region spans residues Gly329–Ala349. A compositionally biased stretch (low complexity) spans Ser334–Ala349.

It belongs to the G-protein coupled receptor 1 family. Opsin subfamily. Post-translationally, phosphorylated on some or all of the serine and threonine residues present in the C-terminal region.

It is found in the membrane. Functionally, visual pigments are the light-absorbing molecules that mediate vision. They consist of an apoprotein, opsin, covalently linked to cis-retinal. The polypeptide is Green-sensitive opsin-3 (opn1mw3) (Danio rerio (Zebrafish)).